The primary structure comprises 101 residues: Protein Tat (101 aa).

The tract at residues 1–20 (MEPVDPNLEPWKHPGSQPTT) is disordered. Residues 1–24 (MEPVDPNLEPWKHPGSQPTTACSN) form an interaction with human CREBBP region. The segment at 1–48 (MEPVDPNLEPWKHPGSQPTTACSNCYCKVCCWHCQLCFLKKGLGISYG) is transactivation. Cys-22, Cys-25, and Cys-27 together coordinate Zn(2+). Residues 22–37 (CSNCYCKVCCWHCQLC) form a cysteine-rich region. Lys-28 is subject to N6-acetyllysine; by host PCAF. 4 residues coordinate Zn(2+): Cys-30, His-33, Cys-34, and Cys-37. The interval 38–48 (FLKKGLGISYG) is core. The segment at 48–101 (GKKKRKPRRGPPQGSKDHQTLIPKQPLPQSQRVSAGQEESKKKVESKAKTDRFA) is disordered. The Nuclear localization signal, RNA-binding (TAR), and protein transduction signature appears at 49-57 (KKKRKPRRG). The segment at 49 to 86 (KKKRKPRRGPPQGSKDHQTLIPKQPLPQSQRVSAGQEE) is interaction with the host capping enzyme RNGTT. An N6-acetyllysine; by host EP300 and GCN5L2 mark is found at Lys-50 and Lys-51. Asymmetric dimethylarginine; by host PRMT6 is present on Arg-52. Lys-71 is covalently cross-linked (Glycyl lysine isopeptide (Lys-Gly) (interchain with G-Cter in ubiquitin)). The segment covering 85–101 (EESKKKVESKAKTDRFA) has biased composition (basic and acidic residues).

This sequence belongs to the lentiviruses Tat family. As to quaternary structure, interacts with host CCNT1. Associates with the P-TEFb complex composed at least of Tat, P-TEFb (CDK9 and CCNT1), TAR RNA, RNA Pol II. Recruits the HATs CREBBP, TAF1/TFIID, EP300, PCAF and GCN5L2. Interacts with host KAT5/Tip60; this interaction targets the latter to degradation. Interacts with the host deacetylase SIRT1. Interacts with host capping enzyme RNGTT; this interaction stimulates RNGTT. Binds to host KDR, and to the host integrins ITGAV/ITGB3 and ITGA5/ITGB1. Interacts with host KPNB1/importin beta-1 without previous binding to KPNA1/importin alpha-1. Interacts with EIF2AK2. Interacts with host nucleosome assembly protein NAP1L1; this interaction may be required for the transport of Tat within the nucleus, since the two proteins interact at the nuclear rim. Interacts with host C1QBP/SF2P32; this interaction involves lysine-acetylated Tat. Interacts with the host chemokine receptors CCR2, CCR3 and CXCR4. Interacts with host DPP4/CD26; this interaction may trigger an anti-proliferative effect. Interacts with host LDLR. Interacts with the host extracellular matrix metalloproteinase MMP1. Interacts with host PRMT6; this interaction mediates Tat's methylation. Interacts with, and is ubiquitinated by MDM2/Hdm2. Interacts with host PSMC3 and HTATIP2. Interacts with STAB1; this interaction may overcome SATB1-mediated repression of IL2 and IL2RA (interleukin) in T cells by binding to the same domain than HDAC1. Interacts (when acetylated) with human CDK13, thereby increasing HIV-1 mRNA splicing and promoting the production of the doubly spliced HIV-1 protein Nef. Interacts with host TBP; this interaction modulates the activity of transcriptional pre-initiation complex. Interacts with host RELA. Interacts with host PLSCR1; this interaction negatively regulates Tat transactivation activity by altering its subcellular distribution. Post-translationally, asymmetrical arginine methylation by host PRMT6 seems to diminish the transactivation capacity of Tat and affects the interaction with host CCNT1. In terms of processing, acetylation by EP300, CREBBP, GCN5L2/GCN5 and PCAF regulates the transactivation activity of Tat. EP300-mediated acetylation of Lys-50 promotes dissociation of Tat from the TAR RNA through the competitive binding to PCAF's bromodomain. In addition, the non-acetylated Tat's N-terminus can also interact with PCAF. PCAF-mediated acetylation of Lys-28 enhances Tat's binding to CCNT1. Lys-50 is deacetylated by SIRT1. Polyubiquitination by host MDM2 does not target Tat to degradation, but activates its transactivation function and fosters interaction with CCNT1 and TAR RNA. Post-translationally, phosphorylated by EIF2AK2 on serine and threonine residues adjacent to the basic region important for TAR RNA binding and function. Phosphorylation of Tat by EIF2AK2 is dependent on the prior activation of EIF2AK2 by dsRNA.

The protein resides in the host nucleus. It localises to the host nucleolus. It is found in the host cytoplasm. The protein localises to the secreted. Its function is as follows. Transcriptional activator that increases RNA Pol II processivity, thereby increasing the level of full-length viral transcripts. Recognizes a hairpin structure at the 5'-LTR of the nascent viral mRNAs referred to as the transactivation responsive RNA element (TAR) and recruits the cyclin T1-CDK9 complex (P-TEFb complex) that will in turn hyperphosphorylate the RNA polymerase II to allow efficient elongation. The CDK9 component of P-TEFb and other Tat-activated kinases hyperphosphorylate the C-terminus of RNA Pol II that becomes stabilized and much more processive. Other factors such as HTATSF1/Tat-SF1, SUPT5H/SPT5, and HTATIP2 are also important for Tat's function. Besides its effect on RNA Pol II processivity, Tat induces chromatin remodeling of proviral genes by recruiting the histone acetyltransferases (HATs) CREBBP, EP300 and PCAF to the chromatin. This also contributes to the increase in proviral transcription rate, especially when the provirus integrates in transcriptionally silent region of the host genome. To ensure maximal activation of the LTR, Tat mediates nuclear translocation of NF-kappa-B by interacting with host RELA. Through its interaction with host TBP, Tat may also modulate transcription initiation. Tat can reactivate a latently infected cell by penetrating in it and transactivating its LTR promoter. In the cytoplasm, Tat is thought to act as a translational activator of HIV-1 mRNAs. Functionally, extracellular circulating Tat can be endocytosed by surrounding uninfected cells via the binding to several surface receptors such as CD26, CXCR4, heparan sulfate proteoglycans (HSPG) or LDLR. Neurons are rarely infected, but they internalize Tat via their LDLR. Through its interaction with nuclear HATs, Tat is potentially able to control the acetylation-dependent cellular gene expression. Modulates the expression of many cellular genes involved in cell survival, proliferation or in coding for cytokines or cytokine receptors. Tat plays a role in T-cell and neurons apoptosis. Tat induced neurotoxicity and apoptosis probably contribute to neuroAIDS. Circulating Tat also acts as a chemokine-like and/or growth factor-like molecule that binds to specific receptors on the surface of the cells, affecting many cellular pathways. In the vascular system, Tat binds to ITGAV/ITGB3 and ITGA5/ITGB1 integrins dimers at the surface of endothelial cells and competes with bFGF for heparin-binding sites, leading to an excess of soluble bFGF. The polypeptide is Protein Tat (Human immunodeficiency virus type 1 group M subtype A (isolate U455) (HIV-1)).